The primary structure comprises 139 residues: Large-conductance mechanosensitive channel (139 aa).

3 helical membrane passes run 19-39 (VGVI…ADII), 40-60 (MPIV…LPLS), and 81-101 (GNFL…FMVI).

Belongs to the MscL family. Homopentamer.

Its subcellular location is the cell inner membrane. Its function is as follows. Channel that opens in response to stretch forces in the membrane lipid bilayer. May participate in the regulation of osmotic pressure changes within the cell. This chain is Large-conductance mechanosensitive channel, found in Nitrobacter winogradskyi (strain ATCC 25391 / DSM 10237 / CIP 104748 / NCIMB 11846 / Nb-255).